We begin with the raw amino-acid sequence, 198 residues long: MQSKRGRPRDEGTHKAILSAAYDLLLEKGFDAVTVDKIAERAKVSKATIYKWWSNKAAVIMDSFLSTATDRLPVPDTGSSVQDIVTHATNLARFLTSREGTVIKELIGAGQLDEKLAEEYRTRFFQPRRLQAKGLLEKGIQKGELRENLDIEVSIDLIYGPIFYRLLITGDEVNDSYVRDLVMNAFKGVQATSATESM.

The 61-residue stretch at 11–71 (EGTHKAILSA…DSFLSTATDR (61 aa)) folds into the HTH tetR-type domain. Residues 34-53 (TVDKIAERAKVSKATIYKWW) constitute a DNA-binding region (H-T-H motif).

This is an uncharacterized protein from Bacillus subtilis (strain 168).